The chain runs to 213 residues: FMN-dependent NADH:quinone oxidoreductase 1 (213 aa).

Residue 18 to 20 coordinates FMN; the sequence is SVS.

This sequence belongs to the azoreductase type 1 family. Homodimer. Requires FMN as cofactor.

It carries out the reaction 2 a quinone + NADH + H(+) = 2 a 1,4-benzosemiquinone + NAD(+). The enzyme catalyses N,N-dimethyl-1,4-phenylenediamine + anthranilate + 2 NAD(+) = 2-(4-dimethylaminophenyl)diazenylbenzoate + 2 NADH + 2 H(+). In terms of biological role, quinone reductase that provides resistance to thiol-specific stress caused by electrophilic quinones. Its function is as follows. Also exhibits azoreductase activity. Catalyzes the reductive cleavage of the azo bond in aromatic azo compounds to the corresponding amines. The protein is FMN-dependent NADH:quinone oxidoreductase 1 of Bacillus cereus (strain ATCC 10987 / NRS 248).